We begin with the raw amino-acid sequence, 202 residues long: ATP-dependent Clp protease proteolytic subunit (202 aa).

The active-site Nucleophile is the serine 106. Residue histidine 131 is part of the active site.

Belongs to the peptidase S14 family. In terms of assembly, fourteen ClpP subunits assemble into 2 heptameric rings which stack back to back to give a disk-like structure with a central cavity, resembling the structure of eukaryotic proteasomes.

Its subcellular location is the cytoplasm. The enzyme catalyses Hydrolysis of proteins to small peptides in the presence of ATP and magnesium. alpha-casein is the usual test substrate. In the absence of ATP, only oligopeptides shorter than five residues are hydrolyzed (such as succinyl-Leu-Tyr-|-NHMec, and Leu-Tyr-Leu-|-Tyr-Trp, in which cleavage of the -Tyr-|-Leu- and -Tyr-|-Trp bonds also occurs).. In terms of biological role, cleaves peptides in various proteins in a process that requires ATP hydrolysis. Has a chymotrypsin-like activity. Plays a major role in the degradation of misfolded proteins. This chain is ATP-dependent Clp protease proteolytic subunit, found in Acidovorax sp. (strain JS42).